The sequence spans 155 residues: Ribonuclease H (155 aa).

In terms of domain architecture, RNase H type-1 spans Met1–Lys146. Mg(2+)-binding residues include Asp9, Glu52, Asp74, and Asp138.

Belongs to the RNase H family. In terms of assembly, monomer. Requires Mg(2+) as cofactor.

The protein resides in the cytoplasm. The enzyme catalyses Endonucleolytic cleavage to 5'-phosphomonoester.. Endonuclease that specifically degrades the RNA of RNA-DNA hybrids. The polypeptide is Ribonuclease H (Ruegeria pomeroyi (strain ATCC 700808 / DSM 15171 / DSS-3) (Silicibacter pomeroyi)).